A 220-amino-acid polypeptide reads, in one-letter code: Eukaryotic translation initiation factor 3 subunit B (220 aa).

Residues 1 to 94 (MPEPIAFDES…LIIELDSAAA (94 aa)) form a sufficient for interaction with HCR1 and TIF32 region. The sufficient for interaction with PIC8 stretch occupies residues 1 to 220 (MPEPIAFDES…GVQAWGGERI (220 aa)). An RRM domain is found at 37–120 (HFVICDGAPI…HRLAVNKLPD (84 aa)).

This sequence belongs to the eIF-3 subunit B family. Component of the eukaryotic translation initiation factor 3 (eIF-3) complex.

Its subcellular location is the cytoplasm. Its function is as follows. RNA-binding component of the eukaryotic translation initiation factor 3 (eIF-3) complex, which is involved in protein synthesis of a specialized repertoire of mRNAs and, together with other initiation factors, stimulates binding of mRNA and methionyl-tRNAi to the 40S ribosome. The eIF-3 complex specifically targets and initiates translation of a subset of mRNAs involved in cell proliferation. This chain is Eukaryotic translation initiation factor 3 subunit B (TIF32), found in Pichia angusta (Yeast).